We begin with the raw amino-acid sequence, 957 residues long: Retinoblastoma-related protein 1 (957 aa).

The segment at 369-569 (TPVSTAMTTA…EKGSSMYNSL (201 aa)) is domain A. A pocket region spans residues 369 to 808 (TPVSTAMTTA…NEVFIPTVKP (440 aa)). The interval 570 to 677 (IVARPTLSAE…PAAGGETCAE (108 aa)) is spacer. A domain B region spans residues 678–808 (TGIGVFLSKI…NEVFIPTVKP (131 aa)). Positions 814–854 (GPGTSPNRNNEPKSGGDAASFPESPRLSRFPNLPDMSPKKV) are disordered.

Belongs to the retinoblastoma protein (RB) family.

It is found in the nucleus. Functionally, regulator of biological processes that recruits a histone deacetylase to control gene transcription. May play a role in the entry into mitosis, negatively regulating the cell proliferation. Formation of stable complexes with geminiviridae replication-associated proteins may create a cellular environment which favors viral DNA replication. The protein is Retinoblastoma-related protein 1 (RBR1) of Triticum aestivum (Wheat).